A 141-amino-acid chain; its full sequence is MQLTSFTDYGLRALIYMASLPEGRMTSISEVTEVYGVSRNHMVKIINQLSRMGYVTAVRGKNGGIRLGKPAGQIRVGDVVRDLEPLSLVNCSSEFCHITPACRLKQALAEAAQSFLKELDNYTLADLVEKNQPLYKLLLVE.

An HTH rrf2-type domain is found at 2-129 (QLTSFTDYGL…DNYTLADLVE (128 aa)). Residues 28-51 (ISEVTEVYGVSRNHMVKIINQLSR) constitute a DNA-binding region (H-T-H motif). [2Fe-2S] cluster is bound by residues C91, C96, and C102.

[2Fe-2S] cluster serves as cofactor.

Nitric oxide-sensitive repressor of genes involved in protecting the cell against nitrosative stress. May require iron for activity. This Klebsiella pneumoniae subsp. pneumoniae (strain ATCC 700721 / MGH 78578) protein is HTH-type transcriptional repressor NsrR.